A 412-amino-acid chain; its full sequence is Inositol polyphosphate-5-phosphatase A (412 aa).

A lipid anchor (S-farnesyl cysteine) is attached at cysteine 409. The propeptide at 410–412 (VVQ) is removed in mature form.

Belongs to the inositol 1,4,5-trisphosphate 5-phosphatase type I family. In terms of assembly, interacts with TASOR. Isoprenylation at Cys-409 is required for localization at the membrane.

The protein resides in the cell membrane. The protein localises to the cell projection. It localises to the dendrite. It catalyses the reaction 1D-myo-inositol 1,4,5-trisphosphate + H2O = 1D-myo-inositol 1,4-bisphosphate + phosphate. The catalysed reaction is 1D-myo-inositol 1,3,4,5-tetrakisphosphate + H2O = 1D-myo-inositol 1,3,4-trisphosphate + phosphate. With respect to regulation, inhibited by EDTA and 2,3-bisphosphoglycerate. Phosphatase that specifically hydrolyzes the 5-phosphate of inositol 1,4,5-trisphosphate to inositol 1,4-bisphosphate, and inositol 1,3,4,5-tetrasphosphate to inositol 1,3,4-trisphosphate. Plays a crucial role in the survival of cerebellar Purkinje cells. This chain is Inositol polyphosphate-5-phosphatase A (INPP5A), found in Canis lupus familiaris (Dog).